The following is a 570-amino-acid chain: Urease subunit alpha (570 aa).

The region spanning 135 to 570 (GGLDIHIHFN…ELPLAKRYSL (436 aa)) is the Urease domain. Residues H140, H142, and K219 each coordinate Ni(2+). K219 bears the N6-carboxylysine mark. H221 is a binding site for substrate. H248 and H274 together coordinate Ni(2+). H322 (proton donor) is an active-site residue. D362 contributes to the Ni(2+) binding site.

This sequence belongs to the metallo-dependent hydrolases superfamily. Urease alpha subunit family. As to quaternary structure, heterotrimer of UreA (gamma), UreB (beta) and UreC (alpha) subunits. Three heterotrimers associate to form the active enzyme. It depends on Ni cation as a cofactor. In terms of processing, carboxylation allows a single lysine to coordinate two nickel ions.

It is found in the cytoplasm. It catalyses the reaction urea + 2 H2O + H(+) = hydrogencarbonate + 2 NH4(+). The protein operates within nitrogen metabolism; urea degradation; CO(2) and NH(3) from urea (urease route): step 1/1. The polypeptide is Urease subunit alpha (Haloquadratum walsbyi (strain DSM 16790 / HBSQ001)).